Here is a 209-residue protein sequence, read N- to C-terminus: Thymidine kinase (209 aa).

ATP is bound by residues 16-23 (GPMFAGKT) and 90-93 (DEAQ). The active-site Proton acceptor is the Glu-91.

The protein belongs to the thymidine kinase family. In terms of assembly, homotetramer.

The protein resides in the cytoplasm. The enzyme catalyses thymidine + ATP = dTMP + ADP + H(+). This Onion yellows phytoplasma (strain OY-M) protein is Thymidine kinase.